The chain runs to 256 residues: Thiazole synthase (256 aa).

The active-site Schiff-base intermediate with DXP is Lys-95. 1-deoxy-D-xylulose 5-phosphate contacts are provided by residues Gly-156, 182-183, and 204-205; these read AG and NT.

Belongs to the ThiG family. Homotetramer. Forms heterodimers with either ThiH or ThiS.

It localises to the cytoplasm. It catalyses the reaction [ThiS sulfur-carrier protein]-C-terminal-Gly-aminoethanethioate + 2-iminoacetate + 1-deoxy-D-xylulose 5-phosphate = [ThiS sulfur-carrier protein]-C-terminal Gly-Gly + 2-[(2R,5Z)-2-carboxy-4-methylthiazol-5(2H)-ylidene]ethyl phosphate + 2 H2O + H(+). Its pathway is cofactor biosynthesis; thiamine diphosphate biosynthesis. Catalyzes the rearrangement of 1-deoxy-D-xylulose 5-phosphate (DXP) to produce the thiazole phosphate moiety of thiamine. Sulfur is provided by the thiocarboxylate moiety of the carrier protein ThiS. In vitro, sulfur can be provided by H(2)S. This is Thiazole synthase from Escherichia coli O8 (strain IAI1).